Reading from the N-terminus, the 51-residue chain is Suberization-associated anionic peroxidase 1 (51 aa).

Histidine 30 contacts heme. Ca(2+) is bound at residue threonine 31.

Belongs to the peroxidase family. Classical plant (class III) peroxidase subfamily. Heme b is required as a cofactor. It depends on Ca(2+) as a cofactor.

The protein resides in the secreted. The catalysed reaction is 2 a phenolic donor + H2O2 = 2 a phenolic radical donor + 2 H2O. Its function is as follows. Removal of H(2)O(2), oxidation of toxic reductants, biosynthesis and degradation of lignin, suberization, auxin catabolism, response to environmental stresses such as wounding, pathogen attack and oxidative stress. These functions might be dependent on each isozyme/isoform in each plant tissue. Functionally, suggested to catalyze the deposition of the aromatic residues of suberin on the cell wall and thus play a role in cell-suberization. This Capsicum annuum (Capsicum pepper) protein is Suberization-associated anionic peroxidase 1.